The following is a 291-amino-acid chain: N-acetylmannosamine kinase (291 aa).

Residues 5–12 (AIDIGGTK) and 132–139 (GVGGGVVS) each bind ATP. Residues His156, Cys166, Cys168, and Cys173 each contribute to the Zn(2+) site.

It belongs to the ROK (NagC/XylR) family. NanK subfamily. Homodimer.

It catalyses the reaction an N-acyl-D-mannosamine + ATP = an N-acyl-D-mannosamine 6-phosphate + ADP + H(+). It functions in the pathway amino-sugar metabolism; N-acetylneuraminate degradation; D-fructose 6-phosphate from N-acetylneuraminate: step 2/5. Catalyzes the phosphorylation of N-acetylmannosamine (ManNAc) to ManNAc-6-P. This is N-acetylmannosamine kinase from Escherichia coli O1:K1 / APEC.